A 1033-amino-acid chain; its full sequence is DNA polymerase I A, chloroplastic (1033 aa).

The segment covering 1–11 (MAVAPPLPPAP) has biased composition (pro residues). Disordered regions lie at residues 1–32 (MAVA…LSSP) and 104–142 (TNGT…PSNS). Residues 1-55 (MAVAPPLPPAPARQLRRWKGSSPRPPPWLSSPFRRTRYLSRPAFAAGGRQDYSPS) constitute a chloroplast transit peptide. The segment covering 115-124 (LRHDPSEDIR) has biased composition (basic and acidic residues). A compositionally biased stretch (polar residues) spans 125 to 142 (SSNYPSLYNQRERGPSNS). One can recognise a 3'-5' exonuclease domain in the interval 321-482 (FGNGKTCIWV…LYESLKNKLE (162 aa)). The polymerase stretch occupies residues 696–1030 (CHAIAALCEV…VDAKYAKSWY (335 aa)).

The protein belongs to the DNA polymerase type-A family. Expressed in shoot apical meristem, root apical meristem, leaf primordia and the marginal meristem.

The protein resides in the plastid. The protein localises to the chloroplast. The enzyme catalyses DNA(n) + a 2'-deoxyribonucleoside 5'-triphosphate = DNA(n+1) + diphosphate. With respect to regulation, inhibited by dideoxythymidine-triphosphate (ddTTP), but not by aphidicolin and N-ethylmaleimide. Functionally, in addition to polymerase activity, this DNA polymerase exhibits 5'-3' exonuclease activity. May be required for DNA replication and accumulation in plastids. The protein is DNA polymerase I A, chloroplastic of Oryza sativa subsp. japonica (Rice).